The chain runs to 283 residues: Diaminopimelate epimerase (283 aa).

Residues Asn-13 and Asn-67 each contribute to the substrate site. The active-site Proton donor is Cys-76. Substrate contacts are provided by residues 77-78, Asn-166, Asn-199, and 217-218; these read GN and ER. The active-site Proton acceptor is Cys-226. 227–228 provides a ligand contact to substrate; sequence GT.

Belongs to the diaminopimelate epimerase family. In terms of assembly, homodimer.

Its subcellular location is the cytoplasm. It carries out the reaction (2S,6S)-2,6-diaminopimelate = meso-2,6-diaminopimelate. Its pathway is amino-acid biosynthesis; L-lysine biosynthesis via DAP pathway; DL-2,6-diaminopimelate from LL-2,6-diaminopimelate: step 1/1. Catalyzes the stereoinversion of LL-2,6-diaminopimelate (L,L-DAP) to meso-diaminopimelate (meso-DAP), a precursor of L-lysine and an essential component of the bacterial peptidoglycan. The chain is Diaminopimelate epimerase from Desulforapulum autotrophicum (strain ATCC 43914 / DSM 3382 / VKM B-1955 / HRM2) (Desulfobacterium autotrophicum).